A 76-amino-acid chain; its full sequence is Toxin Acra III-2 (76 aa).

The region spanning V3–T67 is the LCN-type CS-alpha/beta domain. 3 disulfides stabilise this stretch: C18–C41, C27–C46, and C31–C48.

It belongs to the long (3 C-C) scorpion toxin superfamily. Sodium channel inhibitor family. Beta subfamily. As to expression, expressed by the venom gland.

It localises to the secreted. Its function is as follows. Binds to sodium channels (Nav) and affects the channel activation process. The chain is Toxin Acra III-2 from Androctonus crassicauda (Arabian fat-tailed scorpion).